Consider the following 227-residue polypeptide: LexA repressor (227 aa).

The H-T-H motif DNA-binding region spans phenylalanine 25–threonine 45. Catalysis depends on for autocatalytic cleavage activity residues serine 148 and lysine 186.

It belongs to the peptidase S24 family. Homodimer.

The enzyme catalyses Hydrolysis of Ala-|-Gly bond in repressor LexA.. Its function is as follows. Represses a number of genes involved in the response to DNA damage (SOS response), including recA and lexA. In the presence of single-stranded DNA, RecA interacts with LexA causing an autocatalytic cleavage which disrupts the DNA-binding part of LexA, leading to derepression of the SOS regulon and eventually DNA repair. The polypeptide is LexA repressor (Cereibacter sphaeroides (strain ATCC 17029 / ATH 2.4.9) (Rhodobacter sphaeroides)).